The primary structure comprises 266 residues: Anamorsin homolog (266 aa).

Residues 1-164 are N-terminal SAM-like domain; the sequence is MIINFVGNTL…NITAENPDFL (164 aa). The linker stretch occupies residues 165–185; that stretch reads SNEDNDVSSDDEDLYNNEDDK. Positions 229, 232, 240, and 243 each coordinate [4Fe-4S] cluster. 2 short sequence motifs (cx2C motif) span residues 229 to 232 and 240 to 243; these read CGNC and CASC. Residues 229 to 243 form a fe-S binding site B region; sequence CGNCYLGDAFRCASC.

The protein belongs to the anamorsin family. Monomer. Requires [4Fe-4S] cluster as cofactor.

The protein resides in the cytoplasm. It localises to the mitochondrion intermembrane space. In terms of biological role, component of the cytosolic iron-sulfur (Fe-S) protein assembly (CIA) machinery. Required for the maturation of extramitochondrial Fe-S proteins. Part of an electron transfer chain functioning in an early step of cytosolic Fe-S biogenesis, facilitating the de novo assembly of a [4Fe-4S] cluster on the cytosolic Fe-S scaffold complex. Electrons are transferred from NADPH via a FAD- and FMN-containing diflavin oxidoreductase. Together with the diflavin oxidoreductase, also required for the assembly of the diferric tyrosyl radical cofactor of ribonucleotide reductase (RNR), probably by providing electrons for reduction during radical cofactor maturation in the catalytic small subunit. The sequence is that of Anamorsin homolog from Plasmodium falciparum (isolate 3D7).